The chain runs to 132 residues: MRHRKSGRQLNRNSSHRQAMFRNMASSLVRHEVIKTTVAKAKELRRVVEPLITLAKSDSVANRRLAFARTRDAEVVGKLFNELGPRYQERPGGYTRILKCGLRTGDKAPMAFIELVGRPEDAEAVEADDSAE.

It belongs to the bacterial ribosomal protein bL17 family. In terms of assembly, part of the 50S ribosomal subunit. Contacts protein L32.

This Shewanella sediminis (strain HAW-EB3) protein is Large ribosomal subunit protein bL17.